The sequence spans 150 residues: PTTG1IP family member 2 (150 aa).

Residues 1–19 (MCWLRAWSHILLPVFLSVA) form the signal peptide. At 20–98 (LIQLIFNLSD…SIFWANCNVD (79 aa)) the chain is on the extracellular side. A glycan (N-linked (GlcNAc...) asparagine) is linked at Asn26. Residues 99–119 (LFGIVMLILIVILALAFLWYC) traverse the membrane as a helical segment. Residues 120-150 (LAYYFYMQQHMALYARHGQVPVYNWDAPGDW) lie on the Cytoplasmic side of the membrane.

The protein localises to the membrane. The chain is PTTG1IP family member 2 from Mus musculus (Mouse).